A 915-amino-acid chain; its full sequence is Probable dipeptidyl-aminopeptidase B (915 aa).

The interval 1–82 is disordered; sequence MAPPFTDDPE…GAFLGPPGVP (82 aa). Residues 1–94 lie on the Cytoplasmic side of the membrane; that stretch reads MAPPFTDDPE…RQPMDRGFRR (94 aa). The span at 15–32 shows a compositional bias: low complexity; the sequence is STSRLSQDSLSSVSTTSL. Residues 36–62 are compositionally biased toward basic and acidic residues; the sequence is RIQEEMDRDPSASRSARRDLLPATKDE. The helical; Signal-anchor for type II membrane protein transmembrane segment at 95–115 threads the bilayer; that stretch reads ILIIIGAVFVGAWLAGLGIFV. Topologically, residues 116–915 are vacuolar; sequence LSGSYKHESD…IDTKKRRHVS (800 aa). 2 N-linked (GlcNAc...) asparagine glycosylation sites follow: Asn355 and Asn577. Residue Ser760 is the Charge relay system of the active site. N-linked (GlcNAc...) asparagine glycosylation occurs at Asn819. Catalysis depends on charge relay system residues Asp837 and His870.

The protein belongs to the peptidase S9B family.

The protein localises to the vacuole membrane. The enzyme catalyses Release of an N-terminal dipeptide, Xaa-Yaa-|-Zaa-, from a polypeptide, preferentially when Yaa is Pro, provided Zaa is neither Pro nor hydroxyproline.. Type IV dipeptidyl-peptidase which removes N-terminal dipeptides sequentially from polypeptides having unsubstituted N-termini provided that the penultimate residue is proline. In Metarhizium robertsii (strain ARSEF 23 / ATCC MYA-3075) (Metarhizium anisopliae (strain ARSEF 23)), this protein is Probable dipeptidyl-aminopeptidase B (DAPB).